The following is a 222-amino-acid chain: 2-C-methyl-D-erythritol 4-phosphate cytidylyltransferase (222 aa).

This sequence belongs to the IspD/TarI cytidylyltransferase family. IspD subfamily.

It catalyses the reaction 2-C-methyl-D-erythritol 4-phosphate + CTP + H(+) = 4-CDP-2-C-methyl-D-erythritol + diphosphate. Its pathway is isoprenoid biosynthesis; isopentenyl diphosphate biosynthesis via DXP pathway; isopentenyl diphosphate from 1-deoxy-D-xylulose 5-phosphate: step 2/6. Its function is as follows. Catalyzes the formation of 4-diphosphocytidyl-2-C-methyl-D-erythritol from CTP and 2-C-methyl-D-erythritol 4-phosphate (MEP). This chain is 2-C-methyl-D-erythritol 4-phosphate cytidylyltransferase, found in Thermotoga maritima (strain ATCC 43589 / DSM 3109 / JCM 10099 / NBRC 100826 / MSB8).